Here is a 259-residue protein sequence, read N- to C-terminus: Exotoxin A regulatory protein (259 aa).

It is found in the cell inner membrane. Its function is as follows. Positive regulation of toxA gene transcription. In Pseudomonas aeruginosa (strain ATCC 15692 / DSM 22644 / CIP 104116 / JCM 14847 / LMG 12228 / 1C / PRS 101 / PAO1), this protein is Exotoxin A regulatory protein (toxR).